Here is a 312-residue protein sequence, read N- to C-terminus: Acetylglutamate kinase (312 aa).

Substrate contacts are provided by residues 69 to 70 (GG), Arg91, and Asn191.

This sequence belongs to the acetylglutamate kinase family. ArgB subfamily.

Its subcellular location is the cytoplasm. It carries out the reaction N-acetyl-L-glutamate + ATP = N-acetyl-L-glutamyl 5-phosphate + ADP. It functions in the pathway amino-acid biosynthesis; L-arginine biosynthesis; N(2)-acetyl-L-ornithine from L-glutamate: step 2/4. Its function is as follows. Catalyzes the ATP-dependent phosphorylation of N-acetyl-L-glutamate. The chain is Acetylglutamate kinase from Streptomyces griseus subsp. griseus (strain JCM 4626 / CBS 651.72 / NBRC 13350 / KCC S-0626 / ISP 5235).